Here is a 75-residue protein sequence, read N- to C-terminus: Xibalbin-13 2 (75 aa).

Residues 1 to 27 (MKEANTRRYIYLCLVVVLLSIIITTEA) form the signal peptide. The propeptide occupies 28 to 30 (EDD). Cystine bridges form between Cys34–Cys49, Cys41–Cys54, Cys48–Cys65, and Cys56–Cys63.

It belongs to the xibalbin-13 family. Expressed by the venom gland and the whole body.

The protein resides in the secreted. Functionally, probable neurotoxin. Strongly inhibits voltage-gated potassium channels (Kv1.1/KCNA1, Kv1.2/KCNA2, Kv1.3/KCNA3, and Kv1.6/KCNA6, with the highest toxicity against Kv1.1 (85.1% inhibition at 1 uM)) and mildly inhibits sodium channels (Nav1.2/SCN2A, Nav1.4/SCN4A, Nav1.5/SCN5A, Nav1.6/SCN8A, and BgNav). Induces activation of protein kinase A type II (PKA-II) and MAP kinase Erk1/2 in primary nociceptive and non-nociceptive sensory neurons. Does not show cytotoxic activity. Does not have an impact on Ca2+, cAMP, and NO signaling in the cell types analyzed. Does not interfere with the adhesion of leukocytes to endothelial cells. The sequence is that of Xibalbin-13 2 from Xibalbanus tulumensis (Blind cave remipede).